A 170-amino-acid polypeptide reads, in one-letter code: uncharacterized protein (170 aa).

This is an uncharacterized protein from Arabidopsis thaliana (Mouse-ear cress).